Consider the following 81-residue polypeptide: Large ribosomal subunit protein bL31 (81 aa).

Positions 16, 18, 36, and 39 each coordinate Zn(2+).

This sequence belongs to the bacterial ribosomal protein bL31 family. Type A subfamily. Part of the 50S ribosomal subunit. The cofactor is Zn(2+).

Binds the 23S rRNA. The protein is Large ribosomal subunit protein bL31 of Rhodopirellula baltica (strain DSM 10527 / NCIMB 13988 / SH1).